Reading from the N-terminus, the 219-residue chain is PRELI domain-containing protein 1, mitochondrial (219 aa).

The 139-residue stretch at 36–174 folds into the PRELI/MSF1 domain; that stretch reads TEDIVHREVT…ILAKLQGEAP (139 aa).

In terms of assembly, forms a complex with TRIAP1 in the mitochondrion intermembrane space. Interacts with OPA1 and AIFM1.

Its subcellular location is the mitochondrion. The protein resides in the mitochondrion intermembrane space. It carries out the reaction a 1,2-diacyl-sn-glycero-3-phosphate(in) = a 1,2-diacyl-sn-glycero-3-phosphate(out). Functionally, involved in the modulation of the mitochondrial apoptotic pathway by ensuring the accumulation of cardiolipin (CL) in mitochondrial membranes. In vitro, the TRIAP1:PRELID1 complex mediates the transfer of phosphatidic acid (PA) between liposomes and probably functions as a PA transporter across the mitochondrion intermembrane space to provide PA for CL synthesis in the inner membrane. Regulates the mitochondrial apoptotic pathway in primary Th cells. Regulates Th cell differentiation by down-regulating STAT6 thereby reducing IL-4-induced Th2 cell number. May be important for the development of vital and immunocompetent organs. The polypeptide is PRELI domain-containing protein 1, mitochondrial (PRELID1) (Bos taurus (Bovine)).